The sequence spans 508 residues: Ribonuclease Y (508 aa).

Positions 198-264 constitute a KH domain; sequence TVSVINLPND…RLTIEKLITD (67 aa). Residues 324–417 enclose the HD domain; sequence VLTHSIEVAK…VQAADAVSAS (94 aa).

It belongs to the RNase Y family.

Endoribonuclease that initiates mRNA decay. In Fusobacterium nucleatum subsp. nucleatum (strain ATCC 25586 / DSM 15643 / BCRC 10681 / CIP 101130 / JCM 8532 / KCTC 2640 / LMG 13131 / VPI 4355), this protein is Ribonuclease Y.